The primary structure comprises 72 residues: High-potential iron-sulfur protein isozyme 1 (72 aa).

[4Fe-4S] cluster contacts are provided by Cys-34, Cys-37, Cys-51, and Cys-65.

The protein belongs to the high-potential iron-sulfur protein (HiPIP) family. Homodimer.

In terms of biological role, specific class of high-redox-potential 4Fe-4S ferredoxins. Functions in anaerobic electron transport in most purple and in some other photosynthetic bacteria and in at least one genus (Paracoccus) of halophilic, denitrifying bacteria. This chain is High-potential iron-sulfur protein isozyme 1 (hip1), found in Ectothiorhodospira shaposhnikovii (Ectothiorhodospira vacuolata).